The following is a 422-amino-acid chain: L-threonine dehydratase biosynthetic IlvA (422 aa).

An N6-(pyridoxal phosphate)lysine modification is found at Lys56. Residues Asn83, 189–193, and Ser315 contribute to the pyridoxal 5'-phosphate site; that span reads GGGGL. Residues 339–413 enclose the ACT-like domain; the sequence is HYFILNFPQR…FDPSNIYINE (75 aa).

This sequence belongs to the serine/threonine dehydratase family. As to quaternary structure, homotetramer. Requires pyridoxal 5'-phosphate as cofactor.

It catalyses the reaction L-threonine = 2-oxobutanoate + NH4(+). Its pathway is amino-acid biosynthesis; L-isoleucine biosynthesis; 2-oxobutanoate from L-threonine: step 1/1. Catalyzes the anaerobic formation of alpha-ketobutyrate and ammonia from threonine in a two-step reaction. The first step involved a dehydration of threonine and a production of enamine intermediates (aminocrotonate), which tautomerizes to its imine form (iminobutyrate). Both intermediates are unstable and short-lived. The second step is the nonenzymatic hydrolysis of the enamine/imine intermediates to form 2-ketobutyrate and free ammonia. In the low water environment of the cell, the second step is accelerated by RidA. In Staphylococcus aureus (strain bovine RF122 / ET3-1), this protein is L-threonine dehydratase biosynthetic IlvA (ilvA).